A 365-amino-acid polypeptide reads, in one-letter code: 3-dehydroquinate synthase (365 aa).

NAD(+) is bound by residues 75–80 (DAENGK), 109–113 (GAATD), 133–134 (TT), Lys-146, and Lys-155. Positions 188, 253, and 269 each coordinate Zn(2+).

It belongs to the sugar phosphate cyclases superfamily. Dehydroquinate synthase family. Co(2+) is required as a cofactor. Zn(2+) serves as cofactor. The cofactor is NAD(+).

The protein localises to the cytoplasm. It carries out the reaction 7-phospho-2-dehydro-3-deoxy-D-arabino-heptonate = 3-dehydroquinate + phosphate. Its pathway is metabolic intermediate biosynthesis; chorismate biosynthesis; chorismate from D-erythrose 4-phosphate and phosphoenolpyruvate: step 2/7. Its function is as follows. Catalyzes the conversion of 3-deoxy-D-arabino-heptulosonate 7-phosphate (DAHP) to dehydroquinate (DHQ). The protein is 3-dehydroquinate synthase of Corynebacterium glutamicum (strain R).